A 280-amino-acid chain; its full sequence is Fasciclin-like arabinogalactan protein 3 (280 aa).

The first 24 residues, 1 to 24, serve as a signal peptide directing secretion; sequence MGLKVSSSLLCLTILLAVSSIVSA. An FAS1 domain is found at 25-169; it reads VNITRVLEKY…LSVVQISMPI (145 aa). Residues asparagine 26, asparagine 126, and asparagine 159 are each glycosylated (N-linked (GlcNAc...) asparagine). The span at 180–193 shows a compositional bias: pro residues; that stretch reads VPPPPPMSSPPAPS. The tract at residues 180–262 is disordered; sequence VPPPPPMSSP…EPPSSASNTG (83 aa). Low complexity predominate over residues 219–234; the sequence is APETAPASAPSESDSP. Serine 256 is lipidated: GPI-anchor amidated serine. A propeptide spans 257–280 (removed in mature form); the sequence is SASNTGLSFGAVLVLGFVASFVGF.

Belongs to the fasciclin-like AGP family.

It is found in the cell membrane. In terms of biological role, may be a cell surface adhesion protein. This Arabidopsis thaliana (Mouse-ear cress) protein is Fasciclin-like arabinogalactan protein 3 (FLA3).